The following is a 506-amino-acid chain: (+)-piperitol/(+)-sesamin synthase CYP81Q2 (506 aa).

Residues 3-23 (AEMLYSALALTFAIFMVYRIL) form a helical membrane-spanning segment. Cys-439 provides a ligand contact to heme.

The protein belongs to the cytochrome P450 family. Heme is required as a cofactor. In terms of tissue distribution, expressed in seeds.

It localises to the membrane. It carries out the reaction (+)-piperitol + reduced [NADPH--hemoprotein reductase] + O2 = (+)-sesamin + oxidized [NADPH--hemoprotein reductase] + 2 H2O + H(+). The catalysed reaction is (+)-pinoresinol + reduced [NADPH--hemoprotein reductase] + O2 = (+)-piperitol + oxidized [NADPH--hemoprotein reductase] + 2 H2O + H(+). In terms of biological role, involved in the biosynthesis of (+)-sesamin, a furofuran class lignan. Functions in a dual catalytic mode. Catalyzes the synthesis of (+)-sesamin from (+)- pinoresinol by formation of two successive methylenedioxy bridges on (+)-pinoresinol and (+)-piperitol, respectively. The chain is (+)-piperitol/(+)-sesamin synthase CYP81Q2 from Sesamum radiatum (Black benniseed).